The primary structure comprises 665 residues: UvrABC system protein B (665 aa).

The Helicase ATP-binding domain maps to 25 to 412 (ASIEGGNRYQ…ENRIVEQVIR (388 aa)). 38-45 (GATGTGKT) is a binding site for ATP. Positions 91 to 114 (YYDYYQPEAYIPVTDTYIEKTAAI) match the Beta-hairpin motif. One can recognise a Helicase C-terminal domain in the interval 429 to 583 (QIDDLLGEIK…VAYNKLHGIT (155 aa)). One can recognise a UVR domain in the interval 626 to 661 (PNLIDKLEAQMKEASKKLEFEEAAKLRDRIKQLRDK).

It belongs to the UvrB family. As to quaternary structure, forms a heterotetramer with UvrA during the search for lesions. Interacts with UvrC in an incision complex.

The protein resides in the cytoplasm. The UvrABC repair system catalyzes the recognition and processing of DNA lesions. A damage recognition complex composed of 2 UvrA and 2 UvrB subunits scans DNA for abnormalities. Upon binding of the UvrA(2)B(2) complex to a putative damaged site, the DNA wraps around one UvrB monomer. DNA wrap is dependent on ATP binding by UvrB and probably causes local melting of the DNA helix, facilitating insertion of UvrB beta-hairpin between the DNA strands. Then UvrB probes one DNA strand for the presence of a lesion. If a lesion is found the UvrA subunits dissociate and the UvrB-DNA preincision complex is formed. This complex is subsequently bound by UvrC and the second UvrB is released. If no lesion is found, the DNA wraps around the other UvrB subunit that will check the other stand for damage. In Nostoc sp. (strain PCC 7120 / SAG 25.82 / UTEX 2576), this protein is UvrABC system protein B.